Reading from the N-terminus, the 204-residue chain is Probable GTP-binding protein EngB (204 aa).

Residues 1-21 (MKVSSAEFVTSGTRPAHYPPP) are disordered. Residues 22 to 194 (ELPEVAFAGR…WARIEVMLAA (173 aa)) form the EngB-type G domain. GTP contacts are provided by residues 30-37 (GRSNVGKS), 57-61 (GRTQL), 75-78 (DLPG), 142-145 (TKCD), and 173-175 (FSA). Ser-37 and Thr-59 together coordinate Mg(2+).

This sequence belongs to the TRAFAC class TrmE-Era-EngA-EngB-Septin-like GTPase superfamily. EngB GTPase family. The cofactor is Mg(2+).

Necessary for normal cell division and for the maintenance of normal septation. The sequence is that of Probable GTP-binding protein EngB from Geobacter metallireducens (strain ATCC 53774 / DSM 7210 / GS-15).